A 185-amino-acid polypeptide reads, in one-letter code: Large ribosomal subunit protein uL5 (185 aa).

This sequence belongs to the universal ribosomal protein uL5 family. As to quaternary structure, part of the 50S ribosomal subunit; part of the 5S rRNA/L5/L18/L25 subcomplex. Contacts the 5S rRNA and the P site tRNA. Forms a bridge to the 30S subunit in the 70S ribosome.

Functionally, this is one of the proteins that bind and probably mediate the attachment of the 5S RNA into the large ribosomal subunit, where it forms part of the central protuberance. In the 70S ribosome it contacts protein S13 of the 30S subunit (bridge B1b), connecting the 2 subunits; this bridge is implicated in subunit movement. Contacts the P site tRNA; the 5S rRNA and some of its associated proteins might help stabilize positioning of ribosome-bound tRNAs. This chain is Large ribosomal subunit protein uL5, found in Streptomyces coelicolor (strain ATCC BAA-471 / A3(2) / M145).